A 239-amino-acid chain; its full sequence is Tumor protein p53-inducible nuclear protein 1 (239 aa).

The LIR signature appears at 25–37; that stretch reads EKEDDEWILVDFI.

Interacts with p53/TP53 and HIPK2. Interacts with PRKCG, GABARAP, GABARAPL1, GABARAPL2, MAP1LC3A, MAP1LC3B and MAP1LC3C. Ubiquitously expressed with highest levels in the thymus.

Its subcellular location is the cytoplasm. The protein resides in the cytosol. It localises to the nucleus. The protein localises to the PML body. It is found in the cytoplasmic vesicle. Its subcellular location is the autophagosome. Functionally, antiproliferative and proapoptotic protein involved in cell stress response which acts as a dual regulator of transcription and autophagy. Acts as a positive regulator of autophagy. In response to cellular stress or activation of autophagy, relocates to autophagosomes where it interacts with autophagosome-associated proteins GABARAP, GABARAPL1/L2, MAP1LC3A/B/C and regulates autophagy. Acts as an antioxidant and plays a major role in p53/TP53-driven oxidative stress response. Possesses both a p53/TP53-independent intracellular reactive oxygen species (ROS) regulatory function and a p53/TP53-dependent transcription regulatory function. Positively regulates p53/TP53 and p73/TP73 and stimulates their capacity to induce apoptosis and regulate cell cycle. In response to double-strand DNA breaks, promotes p53/TP53 phosphorylation on 'Ser-46' and subsequent apoptosis. Acts as a tumor suppressor by inducing cell death by an autophagy and caspase-dependent mechanism. Can reduce cell migration by regulating the expression of SPARC. The sequence is that of Tumor protein p53-inducible nuclear protein 1 (Trp53inp1) from Mus musculus (Mouse).